Reading from the N-terminus, the 603-residue chain is Threonine--tRNA ligase (603 aa).

Residues 197–499 (DHRKLGKELG…LIEEYAGDFP (303 aa)) are catalytic. Positions 296, 347, and 476 each coordinate Zn(2+).

This sequence belongs to the class-II aminoacyl-tRNA synthetase family. Homodimer. Zn(2+) is required as a cofactor.

The protein resides in the cytoplasm. It catalyses the reaction tRNA(Thr) + L-threonine + ATP = L-threonyl-tRNA(Thr) + AMP + diphosphate + H(+). Its function is as follows. Catalyzes the attachment of threonine to tRNA(Thr) in a two-step reaction: L-threonine is first activated by ATP to form Thr-AMP and then transferred to the acceptor end of tRNA(Thr). Also edits incorrectly charged L-seryl-tRNA(Thr). This chain is Threonine--tRNA ligase, found in Synechocystis sp. (strain ATCC 27184 / PCC 6803 / Kazusa).